The sequence spans 353 residues: Photosystem II D2 protein (353 aa).

N-acetylthreonine is present on Thr2. Position 2 is a phosphothreonine (Thr2). Residues 41–61 traverse the membrane as a helical segment; the sequence is CAYFALGGWFTGTTFVTSWYT. His118 lines the chlorophyll a pocket. The chain crosses the membrane as a helical span at residues 125–141; the sequence is GFMLRQFELARSVQLRP. The pheophytin a site is built by Gln130 and Asn143. Residues 153 to 166 traverse the membrane as a helical segment; the sequence is VFVSVFLIYPLGQS. His198 contacts chlorophyll a. A helical transmembrane segment spans residues 208-228; the sequence is AALLCAIHGATVENTLFEDGD. A plastoquinone-binding residues include His215 and Phe262. His215 serves as a coordination point for Fe cation. His269 serves as a coordination point for Fe cation. A helical transmembrane segment spans residues 279–295; the sequence is GLWMSALGVVGLALNLR.

Belongs to the reaction center PufL/M/PsbA/D family. PSII is composed of 1 copy each of membrane proteins PsbA, PsbB, PsbC, PsbD, PsbE, PsbF, PsbH, PsbI, PsbJ, PsbK, PsbL, PsbM, PsbT, PsbX, PsbY, PsbZ, Psb30/Ycf12, at least 3 peripheral proteins of the oxygen-evolving complex and a large number of cofactors. It forms dimeric complexes. It depends on The D1/D2 heterodimer binds P680, chlorophylls that are the primary electron donor of PSII, and subsequent electron acceptors. It shares a non-heme iron and each subunit binds pheophytin, quinone, additional chlorophylls, carotenoids and lipids. There is also a Cl(-1) ion associated with D1 and D2, which is required for oxygen evolution. The PSII complex binds additional chlorophylls, carotenoids and specific lipids. as a cofactor.

Its subcellular location is the plastid. The protein localises to the chloroplast thylakoid membrane. It catalyses the reaction 2 a plastoquinone + 4 hnu + 2 H2O = 2 a plastoquinol + O2. Its function is as follows. Photosystem II (PSII) is a light-driven water:plastoquinone oxidoreductase that uses light energy to abstract electrons from H(2)O, generating O(2) and a proton gradient subsequently used for ATP formation. It consists of a core antenna complex that captures photons, and an electron transfer chain that converts photonic excitation into a charge separation. The D1/D2 (PsbA/PsbD) reaction center heterodimer binds P680, the primary electron donor of PSII as well as several subsequent electron acceptors. D2 is needed for assembly of a stable PSII complex. This is Photosystem II D2 protein from Aethionema grandiflorum (Persian stone-cress).